Consider the following 80-residue polypeptide: U6-ctenitoxin-Pn1a (80 aa).

The signal sequence occupies residues M1–A21. Residues E22–R37 constitute a propeptide that is removed on maturation. Cystine bridges form between C39–C54, C46–C59, C53–C69, and C61–C67. Residues T72–R80 constitute a propeptide that is removed on maturation.

This sequence belongs to the neurotoxin 02 (plectoxin) family. 01 (Tx3) subfamily. Expressed by the venom gland.

It localises to the secreted. Its function is as follows. Antagonist of L-type calcium channels (Cav1/CACNA1). This is U6-ctenitoxin-Pn1a from Phoneutria nigriventer (Brazilian armed spider).